Reading from the N-terminus, the 90-residue chain is Small ribosomal subunit protein uS15 (90 aa).

The protein belongs to the universal ribosomal protein uS15 family. Part of the 30S ribosomal subunit. Forms a bridge to the 50S subunit in the 70S ribosome, contacting the 23S rRNA.

Its function is as follows. One of the primary rRNA binding proteins, it binds directly to 16S rRNA where it helps nucleate assembly of the platform of the 30S subunit by binding and bridging several RNA helices of the 16S rRNA. Forms an intersubunit bridge (bridge B4) with the 23S rRNA of the 50S subunit in the ribosome. This chain is Small ribosomal subunit protein uS15, found in Campylobacter lari (strain RM2100 / D67 / ATCC BAA-1060).